Reading from the N-terminus, the 237-residue chain is Ribonuclease PH (237 aa).

Residues arginine 86 and 124 to 126 (GTR) contribute to the phosphate site.

The protein belongs to the RNase PH family. As to quaternary structure, homohexameric ring arranged as a trimer of dimers.

It catalyses the reaction tRNA(n+1) + phosphate = tRNA(n) + a ribonucleoside 5'-diphosphate. Functionally, phosphorolytic 3'-5' exoribonuclease that plays an important role in tRNA 3'-end maturation. Removes nucleotide residues following the 3'-CCA terminus of tRNAs; can also add nucleotides to the ends of RNA molecules by using nucleoside diphosphates as substrates, but this may not be physiologically important. Probably plays a role in initiation of 16S rRNA degradation (leading to ribosome degradation) during starvation. This chain is Ribonuclease PH, found in Beijerinckia indica subsp. indica (strain ATCC 9039 / DSM 1715 / NCIMB 8712).